The chain runs to 62 residues: Large ribosomal subunit protein uL30 (62 aa).

The protein belongs to the universal ribosomal protein uL30 family. Part of the 50S ribosomal subunit.

This is Large ribosomal subunit protein uL30 from Paracoccus denitrificans (strain Pd 1222).